The chain runs to 141 residues: Large ribosomal subunit protein uL11 (141 aa).

It belongs to the universal ribosomal protein uL11 family. Part of the ribosomal stalk of the 50S ribosomal subunit. Interacts with L10 and the large rRNA to form the base of the stalk. L10 forms an elongated spine to which L12 dimers bind in a sequential fashion forming a multimeric L10(L12)X complex. Post-translationally, one or more lysine residues are methylated.

Its function is as follows. Forms part of the ribosomal stalk which helps the ribosome interact with GTP-bound translation factors. The protein is Large ribosomal subunit protein uL11 of Campylobacter jejuni subsp. jejuni serotype O:6 (strain 81116 / NCTC 11828).